Reading from the N-terminus, the 183-residue chain is Dual-action ribosomal maturation protein DarP (183 aa).

This sequence belongs to the DarP family.

Its subcellular location is the cytoplasm. Member of a network of 50S ribosomal subunit biogenesis factors which assembles along the 30S-50S interface, preventing incorrect 23S rRNA structures from forming. Promotes peptidyl transferase center (PTC) maturation. The sequence is that of Dual-action ribosomal maturation protein DarP from Escherichia coli O7:K1 (strain IAI39 / ExPEC).